Reading from the N-terminus, the 370-residue chain is Glucan endo-1,3-beta-glucosidase (370 aa).

The N-terminal stretch at 1–32 (MASFFARTRRFSLVSLFLLELFTINLIPTTDA) is a signal peptide. At Gln33 the chain carries Pyrrolidone carboxylic acid. The active-site Proton donor is Glu127. Glu272 (nucleophile) is an active-site residue. A propeptide spans 348-370 (GERRDGEIVEGDFNGTVSLKSDM) (removed in mature form). Asn361 carries N-linked (GlcNAc...) asparagine glycosylation.

It belongs to the glycosyl hydrolase 17 family. As to expression, constitutively expressed in seedling roots.

It catalyses the reaction Hydrolysis of (1-&gt;3)-beta-D-glucosidic linkages in (1-&gt;3)-beta-D-glucans.. In terms of biological role, implicated in the defense of plants against pathogens. The sequence is that of Glucan endo-1,3-beta-glucosidase from Pisum sativum (Garden pea).